A 227-amino-acid chain; its full sequence is PKHD-type hydroxylase Bphyt_7102 (227 aa).

In terms of domain architecture, Fe2OG dioxygenase spans 80–179 (QVYPPLFNRY…RIASFFWVQS (100 aa)). 3 residues coordinate Fe cation: His98, Asp100, and His160. Residue Arg170 participates in 2-oxoglutarate binding.

The cofactor is Fe(2+). L-ascorbate is required as a cofactor.

The protein is PKHD-type hydroxylase Bphyt_7102 of Paraburkholderia phytofirmans (strain DSM 17436 / LMG 22146 / PsJN) (Burkholderia phytofirmans).